Here is an 837-residue protein sequence, read N- to C-terminus: Toll-like receptor 4 (837 aa).

The signal sequence occupies residues 1–23 (MMSASRLAGTLIPAMAFLSCVRP). The Extracellular portion of the chain corresponds to 24-629 (ESWEPCVVPN…SLNITCQMNK (606 aa)). Cys-29 and Cys-38 are oxidised to a cystine. Asn-33 carries N-linked (GlcNAc...) asparagine glycosylation. LRR repeat units lie at residues 53–74 (STKN…SFFS), 77–98 (ELQV…AYQS), 101–122 (HLST…AFSG), 125–146 (SLQK…PIGH), and 149–170 (TLKE…EYFS). Residue Asn-171 is glycosylated (N-linked (GlcNAc...) asparagine). LRR repeat units lie at residues 174–197 (NLEY…RVLH), 203–223 (NLSL…AFKE), and 225–245 (RLHK…KTCI). Asn-203 carries N-linked (GlcNAc...) asparagine glycosylation. Cys-279 and Cys-304 are disulfide-bonded. Residues Asn-280 and Asn-307 are each glycosylated (N-linked (GlcNAc...) asparagine). 10 LRR repeats span residues 329–349 (GWQH…LKLK), 350–371 (SLKR…VDLP), 372–392 (SLEF…CSQS), 398–420 (SLKY…LGLE), 421–442 (QLEH…SVFL), 446–454 (NLIYLDISH), 470–493 (SLEV…FTEL), 495–516 (NLTF…AFNS), 519–540 (SLQV…PYKC), and 543–563 (SLRV…QELQ). A disulfide bond links Cys-388 and Cys-389. Residues Asn-495 and Asn-524 are each glycosylated (N-linked (GlcNAc...) asparagine). An N-linked (GlcNAc...) asparagine glycan is attached at Asn-573. In terms of domain architecture, LRRCT spans 577 to 627 (NDFACTCEHQSFLQWIKDQRQLLVEVERMECATPSDKQGMPVLSLNITCQM). 2 disulfide bridges follow: Cys-581–Cys-607 and Cys-583–Cys-625. N-linked (GlcNAc...) asparagine glycosylation is found at Asn-622 and Asn-628. A helical membrane pass occupies residues 630–650 (TIIGVSVLSVLVVSVVAVLVY). The Cytoplasmic segment spans residues 651-837 (KFYFHLMLLA…GCNWQEATSI (187 aa)). One can recognise a TIR domain in the interval 670 to 813 (NVYDAFVIYS…IFWRRLRKAL (144 aa)).

Belongs to the Toll-like receptor family. In terms of assembly, belongs to the lipopolysaccharide (LPS) receptor, a multi-protein complex containing at least CD14, LY96 and TLR4. Binding to bacterial LPS leads to homodimerization. Interacts with LY96 via the extracellular domain. Interacts with MYD88 and TIRAP via their respective TIR domains. Interacts with TICAM2. Interacts with NOX4. Interacts with CNPY3 and HSP90B1; this interaction is required for proper folding in the endoplasmic reticulum. Interacts with MAP3K21; this interaction leads to negative regulation of TLR4 signaling. Interacts with CD36, following CD36 stimulation by oxLDL or amyloid-beta 42, and forms a heterodimer with TLR6. The trimeric complex is internalized and triggers inflammatory response. LYN kinase activity facilitates TLR4-TLR6 heterodimerization and signal initiation. Interacts with TICAM1 in response to LPS in a WDFY1-dependent manner. Interacts with WDFY1 in response to LPS. Interacts with SMPDL3B. Interacts with CEACAM1; upon lipopolysaccharide stimulation, forms a complex including TLR4 and the phosphorylated form of SYK and CEACAM1, which in turn, recruits PTPN6 that dephosphorylates SYK, reducing the production of reactive oxygen species (ROS) and lysosome disruption, which in turn, reduces the activity of the inflammasome. Interacts with RFTN1; the interaction occurs in response to lipopolysaccharide stimulation. Interacts with SCIMP; the interaction occurs in response to lipopolysaccharide stimulation and is enhanced by phosphorylation of SCIMP by LYN. This interaction facilitates the phosphorylation of TLR4 by LYN which elicits a selective cytokine response in macrophages. Interacts with TRAF3IP3. Interacts with TREM1; this interaction enhances TLR4-mediated inflammatory response. Interacts with ZG16B/PAUF. Interacts with CD82; this interaction inhibits TLR4-mediated signaling pathway. Phosphorylated on tyrosine residues by LYN after binding lipopolysaccharide. In terms of processing, ubiquitinated by RNF128 via 'Lys-28'-linked polyubiquitin chains, leading to proteasomal degradation.

The protein localises to the cell membrane. It is found in the early endosome. It localises to the cell projection. Its subcellular location is the ruffle. In terms of biological role, transmembrane receptor that functions as a pattern recognition receptor recognizing pathogen- and damage-associated molecular patterns (PAMPs and DAMPs) to induce innate immune responses via downstream signaling pathways. At the plasma membrane, cooperates with LY96 to mediate the innate immune response to bacterial lipopolysaccharide (LPS). Also involved in LPS-independent inflammatory responses triggered by free fatty acids, such as palmitate, and Ni(2+). Mechanistically, acts via MYD88, TIRAP and TRAF6, leading to NF-kappa-B activation, cytokine secretion and the inflammatory response. Alternatively, CD14-mediated TLR4 internalization via endocytosis is associated with the initiation of a MYD88-independent signaling via the TICAM1-TBK1-IRF3 axis leading to type I interferon production. In addition to the secretion of proinflammatory cytokines, initiates the activation of NLRP3 inflammasome and formation of a positive feedback loop between autophagy and NF-kappa-B signaling cascade. In complex with TLR6, promotes inflammation in monocytes/macrophages by associating with TLR6 and the receptor CD86. Upon ligand binding, such as oxLDL or amyloid-beta 42, the TLR4:TLR6 complex is internalized and triggers inflammatory response, leading to NF-kappa-B-dependent production of CXCL1, CXCL2 and CCL9 cytokines, via MYD88 signaling pathway, and CCL5 cytokine, via TICAM1 signaling pathway. In myeloid dendritic cells, vesicular stomatitis virus glycoprotein G but not LPS promotes the activation of IRF7, leading to type I IFN production in a CD14-dependent manner. This Gorilla gorilla gorilla (Western lowland gorilla) protein is Toll-like receptor 4 (TLR4).